A 418-amino-acid chain; its full sequence is Actin-like protein C08B11.6 (418 aa).

This sequence belongs to the actin family. ARP6 subfamily.

It is found in the cytoplasm. Its subcellular location is the cytoskeleton. The protein is Actin-like protein C08B11.6 (arp-6) of Caenorhabditis elegans.